Reading from the N-terminus, the 1260-residue chain is Kinesin-like protein KIN-14E (1260 aa).

One can recognise a MyTH4 domain in the interval Phe115 to Leu274. Residues Leu279–Tyr593 form the FERM domain. 2 coiled-coil regions span residues Gln615–Val676 and Ser753–Ile853. Positions Lys888–Ile1209 constitute a Kinesin motor domain. ATP is bound at residue Gly972–Phe977. The calmodulin-binding stretch occupies residues Ile1217–Lys1239. Residues Glu1221 to Ser1260 form a homodimerization domain region. Residues Ala1236 to Ser1260 are disordered. Residues Asp1251 to Ser1260 are compositionally biased toward basic and acidic residues.

This sequence belongs to the TRAFAC class myosin-kinesin ATPase superfamily. Kinesin family. KIN-14 subfamily. In terms of assembly, homodimer (via C-terminus). Binds microtubules via its N-terminus containing the MyTH4 domain and binds F-actin via its FERM domain. Interacts with KIPK1. Interacts with KIPK2. Interacts with AN. Interacts with AIR9. Interacts (via C-terminus) with KIC, CAM2, CAM4 and CAM6. KIC and calmodulin show competitive binding to KCBP. Binding to calmodulin inhibits microtubule binding activity. Binding to KIC inhibits microtubule binding activity and microtubule-stimulated ATPase activity. Widely expressed with the highest levels in flowers. Strongly expressed in the root tip. Highly detected in the branch apex of the trichome.

It is found in the cytoplasm. The protein resides in the cell cortex. The protein localises to the cytoskeleton. It localises to the spindle. Its subcellular location is the phragmoplast. Functionally, minus-end microtubule-dependent motor protein involved in the regulation of cell division and trichome morphogenesis through microtubules bundling. Possesses basal and microtubule-stimulated ATPase activities. Acts as a hub that brings together microtubules and actin filaments to modulate the cytoskeleton during trichome formation and morphogenesis. Could be involved in the negative regulation of root growth. The protein is Kinesin-like protein KIN-14E of Arabidopsis thaliana (Mouse-ear cress).